The primary structure comprises 151 residues: 3-hydroxyacyl-[acyl-carrier-protein] dehydratase FabZ (151 aa).

The active site involves His52.

The protein belongs to the thioester dehydratase family. FabZ subfamily.

It localises to the cytoplasm. The enzyme catalyses a (3R)-hydroxyacyl-[ACP] = a (2E)-enoyl-[ACP] + H2O. Functionally, involved in unsaturated fatty acids biosynthesis. Catalyzes the dehydration of short chain beta-hydroxyacyl-ACPs and long chain saturated and unsaturated beta-hydroxyacyl-ACPs. This is 3-hydroxyacyl-[acyl-carrier-protein] dehydratase FabZ (fabZ1) from Lactococcus lactis subsp. lactis (strain IL1403) (Streptococcus lactis).